A 499-amino-acid polypeptide reads, in one-letter code: Probable cytochrome P450 cyp-35D1 (499 aa).

Residue Cys444 participates in heme binding.

This sequence belongs to the cytochrome P450 family. It depends on heme as a cofactor. As to expression, expressed in hypodermis, intestine and vulva upon thiabendazole (TBZ) exposure.

Cytochromes P450 are a group of heme-thiolate monooxygenases. They oxidize a variety of structurally unrelated compounds, including steroids, fatty acids, and xenobiotics. Involved in the oxidative metabolism of thiabendazole (TBZ). Catalyzes the conversion of TBZ to its hydroxylated form. This is Probable cytochrome P450 cyp-35D1 from Caenorhabditis elegans.